The sequence spans 205 residues: MSEIKLNYHKTHFLTSAPNIRSIPEDTGIEIAFAGRSNAGKSTALNALTNQKNLARTSKTPGRTQLINLFEVEPNCKLVDLPGYGYAAVPEQMKIQWQKSLGEYLQKRECLAGLVVLMDIRHPLKDLDQQMIEWAVSANLPVLLLLTKADKLSQSARSKQVKMVREAILPFQGDIQVEAFSAQNKIGIDKLAAKLDFWFSPLFAK.

One can recognise an EngB-type G domain in the interval 27–201 (TGIEIAFAGR…AAKLDFWFSP (175 aa)). GTP-binding positions include 35 to 42 (GRSNAGKS), 62 to 66 (GRTQL), 80 to 83 (DLPG), 147 to 150 (TKAD), and 180 to 182 (FSA). Ser42 and Thr64 together coordinate Mg(2+).

The protein belongs to the TRAFAC class TrmE-Era-EngA-EngB-Septin-like GTPase superfamily. EngB GTPase family. Mg(2+) serves as cofactor.

Necessary for normal cell division and for the maintenance of normal septation. The chain is Probable GTP-binding protein EngB from Haemophilus influenzae (strain 86-028NP).